The sequence spans 378 residues: GDP-mannose-dependent alpha-mannosyltransferase (378 aa).

The protein belongs to the glycosyltransferase group 1 family. Glycosyltransferase 4 subfamily.

Its pathway is phospholipid metabolism; phosphatidylinositol metabolism. Its function is as follows. Catalyzes the addition of a mannose residue from GDP-D-mannose to GlcAGroAc2 to generate 1,2-di-O-C16/C18:1-(alpha-D-mannopyranosyl)-(1-4)-(alpha-D-glucopyranosyluronic acid)-(1-3)-glycerol(ManGlcAGroAc2). In Mycobacterium tuberculosis (strain CDC 1551 / Oshkosh), this protein is GDP-mannose-dependent alpha-mannosyltransferase (mgtA).